Reading from the N-terminus, the 292-residue chain is Fat storage-inducing transmembrane protein 1 (292 aa).

The Lumenal segment spans residues 1-18; sequence MERGPVVGAGRGAGARIR. Residues 19-39 traverse the membrane as a helical segment; it reads ALLGGLVRVLLWVASALLYFG. The Cytoplasmic segment spans residues 40–54; that stretch reads SEQAARLLGSPCLRR. A helical transmembrane segment spans residues 55 to 75; it reads LYHAWLAAVVIFGPLLQFHVN. Over 76 to 94 the chain is Lumenal; the sequence is PRTIFASHGNFFNIKFVNS. Residues 95–115 traverse the membrane as a helical segment; it reads AWGWTCTFLGGFVLLVVFLAT. The Cytoplasmic portion of the chain corresponds to 116–141; sequence RRVAVTARHLSRLVVGAAVWRGAGRA. A helical membrane pass occupies residues 142 to 162; it reads FLLIEDLTGSCFEPLPQGLLL. Over 163–187 the chain is Lumenal; sequence HELPDRRSCLAAGHQWRGYTVSSHT. Residue histidine 186 is part of the active site. A helical transmembrane segment spans residues 188–208; sequence FLLTFCCLLMAEEAAVFAKYL. The Cytoplasmic portion of the chain corresponds to 209–220; it reads AHGLPAGAPLRL. Residues 221–241 form a helical membrane-spanning segment; that stretch reads VFLLNVLLLGLWNFLLLCTVI. Over 242 to 249 the chain is Lumenal; sequence YFHQYTHK. Histidine 244 is an active-site residue. The helical transmembrane segment at 250–270 threads the bilayer; sequence VVGAAVGTFAWYLTYGSWYHQ. Residues 271–292 lie on the Cytoplasmic side of the membrane; the sequence is PWSPGSPGHGLFPRPHSIHKHN.

The protein belongs to the FIT family. FIT1 subfamily.

It localises to the endoplasmic reticulum membrane. Plays an important role in the formation of lipid droplets (LDs) which are storage organelles at the center of lipid and energy homeostasis. Directly binds to diacylglycerol (DAGs) and triacylglycerol. This Bos taurus (Bovine) protein is Fat storage-inducing transmembrane protein 1.